Consider the following 21-residue polypeptide: Major outer membrane protein (21 aa).

Disulfide bond interactions within and between MOMP molecules and other components form high molecular-weight oligomers.

The protein resides in the cell outer membrane. Functionally, structural rigidity of the outer membrane of elementary bodies and porin forming, permitting diffusion of solutes through the intracellular reticulate body membrane. In Actinobacillus equuli, this protein is Major outer membrane protein.